A 491-amino-acid polypeptide reads, in one-letter code: Protein ICE2 (491 aa).

Over 1–13 (MTSLSKSFMQSGR) the chain is Cytoplasmic. A helical membrane pass occupies residues 14–34 (ICAACFYLLFTLLSIPISFKV). Topologically, residues 35–40 (GGLECG) are lumenal. The helical transmembrane segment at 41–61 (LSFTVTLFTLYFITTTLNVLA) threads the bilayer. Over 62 to 74 (RRHGGRLYIFFTN) the chain is Cytoplasmic. A helical membrane pass occupies residues 75–95 (CLYYSQHFIIASLLYLFLSGF). The Lumenal segment spans residues 96–149 (SNDELGNVLKNKYNESESFLEALKNSLNSNQINYVLYYYYYRFVVQPWQFVLTK). A helical membrane pass occupies residues 150–170 (STPFFTLSEGFFTILAIQAVG). Residues 171-184 (ETNRWLSNDLNSNT) lie on the Cytoplasmic side of the membrane. The chain crosses the membrane as a helical span at residues 185 to 205 (WIISSLLTSGGVITASLYYLY). At 206–218 (RIYVTPIWPLSIQ) the chain is on the lumenal side. A helical membrane pass occupies residues 219 to 239 (TASLLGLVLSMVCGLGLYGIV). Topologically, residues 240–294 (SQKGSVIESSLFFAYIVRCIYEISPKLATTATDEILNLFKDVWQKHQRNLPTADN) are cytoplasmic. Residues 295–315 (LLCYFHNVILKNAEVLWGSFI) traverse the membrane as a helical segment. Over 316-373 (PRGRKKTGDFHDKLISILSFEKVSLISKPFWKFFKNFTFSVPLSINEFCQVTIKMASE) the chain is Lumenal. The chain crosses the membrane as a helical span at residues 374–394 (SVSPAIVINLCFRVLMFYSAT). Topologically, residues 395–413 (RIIPALQRKNDKQLRKSRR) are cytoplasmic. The helical transmembrane segment at 414–434 (IMKGLYWYSPCILIAMYTHLI) threads the bilayer. The Lumenal segment spans residues 435–461 (LQYSGELKKDLCIWGCSEKWFGVDQPE). The helical transmembrane segment at 462 to 482 (IIVDSWGFWNWCNIFCTILVY) threads the bilayer. At 483–491 (ATELIGSGS) the chain is on the cytoplasmic side.

Its subcellular location is the endoplasmic reticulum membrane. The polypeptide is Protein ICE2 (ICE2) (Saccharomyces cerevisiae (strain ATCC 204508 / S288c) (Baker's yeast)).